A 144-amino-acid chain; its full sequence is Large ribosomal subunit protein uL15 (144 aa).

Residues 1-57 (MQLNDLRSAPGARREKHRPGRGIGSGLGKTGGRGHKGLTSRSGGKVAPGFEGGQQPL) are disordered. Positions 21-31 (RGIGSGLGKTG) are enriched in gly residues.

It belongs to the universal ribosomal protein uL15 family. In terms of assembly, part of the 50S ribosomal subunit.

Binds to the 23S rRNA. In Pseudomonas aeruginosa (strain LESB58), this protein is Large ribosomal subunit protein uL15.